A 141-amino-acid polypeptide reads, in one-letter code: Large-conductance mechanosensitive channel (141 aa).

Transmembrane regions (helical) follow at residues 16–36 (VIDLAVGVIIGAAFGKIVDSL) and 86–106 (GNFITVAVNFLILAFIVFLMV).

Belongs to the MscL family. In terms of assembly, homopentamer.

Its subcellular location is the cell inner membrane. In terms of biological role, channel that opens in response to stretch forces in the membrane lipid bilayer. May participate in the regulation of osmotic pressure changes within the cell. The polypeptide is Large-conductance mechanosensitive channel (Ralstonia nicotianae (strain ATCC BAA-1114 / GMI1000) (Ralstonia solanacearum)).